Consider the following 577-residue polypeptide: Sulfite reductase [NADPH] hemoprotein beta-component (577 aa).

Residues Cys440, Cys446, Cys486, and Cys490 each contribute to the [4Fe-4S] cluster site. Cys490 lines the siroheme pocket.

Belongs to the nitrite and sulfite reductase 4Fe-4S domain family. As to quaternary structure, alpha(8)-beta(8). The alpha component is a flavoprotein, the beta component is a hemoprotein. The cofactor is siroheme. It depends on [4Fe-4S] cluster as a cofactor.

It carries out the reaction hydrogen sulfide + 3 NADP(+) + 3 H2O = sulfite + 3 NADPH + 4 H(+). It functions in the pathway sulfur metabolism; hydrogen sulfide biosynthesis; hydrogen sulfide from sulfite (NADPH route): step 1/1. Its function is as follows. Component of the sulfite reductase complex that catalyzes the 6-electron reduction of sulfite to sulfide. This is one of several activities required for the biosynthesis of L-cysteine from sulfate. The chain is Sulfite reductase [NADPH] hemoprotein beta-component from Vibrio cholerae serotype O1 (strain ATCC 39315 / El Tor Inaba N16961).